Reading from the N-terminus, the 274-residue chain is Ribosomal RNA small subunit methyltransferase A (274 aa).

The S-adenosyl-L-methionine site is built by Asn20, Leu22, Gly47, Glu68, Asp90, and Asn110.

It belongs to the class I-like SAM-binding methyltransferase superfamily. rRNA adenine N(6)-methyltransferase family. RsmA subfamily.

The protein resides in the cytoplasm. The enzyme catalyses adenosine(1518)/adenosine(1519) in 16S rRNA + 4 S-adenosyl-L-methionine = N(6)-dimethyladenosine(1518)/N(6)-dimethyladenosine(1519) in 16S rRNA + 4 S-adenosyl-L-homocysteine + 4 H(+). Specifically dimethylates two adjacent adenosines (A1518 and A1519) in the loop of a conserved hairpin near the 3'-end of 16S rRNA in the 30S particle. May play a critical role in biogenesis of 30S subunits. In Chlorobaculum parvum (strain DSM 263 / NCIMB 8327) (Chlorobium vibrioforme subsp. thiosulfatophilum), this protein is Ribosomal RNA small subunit methyltransferase A.